Reading from the N-terminus, the 271-residue chain is Centromere protein K (271 aa).

2 coiled-coil regions span residues D11–L44 and L102–Q151.

The protein belongs to the CENP-K/MCM22 family. Component of the CENPA-CAD complex, composed of CENPI, CENPK, CENPL, CENPO, CENPP, CENPQ, CENPR and CENPS. The CENPA-CAD complex interacts with the CENPA-NAC complex, at least composed of CENPA, CENPC, CENPH, CENPM, CENPN, CENPT and CENPU. May interact with Sox6. In terms of tissue distribution, highly expressed in testis.

Its subcellular location is the nucleus. It localises to the chromosome. The protein resides in the centromere. The protein localises to the kinetochore. Its function is as follows. Component of the CENPA-CAD (nucleosome distal) complex, a complex recruited to centromeres which is involved in assembly of kinetochore proteins, mitotic progression and chromosome segregation. May be involved in incorporation of newly synthesized CENPA into centromeres via its interaction with the CENPA-NAC complex. Acts in coordination with KNL1 to recruit the NDC80 complex to the outer kinetochore. The sequence is that of Centromere protein K (Cenpk) from Mus musculus (Mouse).